A 307-amino-acid polypeptide reads, in one-letter code: tRNA pseudouridine synthase B (307 aa).

The active-site Nucleophile is the aspartate 38.

Belongs to the pseudouridine synthase TruB family. Type 1 subfamily.

The enzyme catalyses uridine(55) in tRNA = pseudouridine(55) in tRNA. In terms of biological role, responsible for synthesis of pseudouridine from uracil-55 in the psi GC loop of transfer RNAs. This is tRNA pseudouridine synthase B from Bacillus cereus (strain ATCC 14579 / DSM 31 / CCUG 7414 / JCM 2152 / NBRC 15305 / NCIMB 9373 / NCTC 2599 / NRRL B-3711).